The following is a 354-amino-acid chain: UPF0597 protein PPA0217 (354 aa).

It belongs to the UPF0597 family.

The polypeptide is UPF0597 protein PPA0217 (Cutibacterium acnes (strain DSM 16379 / KPA171202) (Propionibacterium acnes)).